The chain runs to 142 residues: Large ribosomal subunit protein uL11 (142 aa).

Belongs to the universal ribosomal protein uL11 family. As to quaternary structure, part of the ribosomal stalk of the 50S ribosomal subunit. Interacts with L10 and the large rRNA to form the base of the stalk. L10 forms an elongated spine to which L12 dimers bind in a sequential fashion forming a multimeric L10(L12)X complex. One or more lysine residues are methylated.

Functionally, forms part of the ribosomal stalk which helps the ribosome interact with GTP-bound translation factors. This Dichelobacter nodosus (strain VCS1703A) protein is Large ribosomal subunit protein uL11.